We begin with the raw amino-acid sequence, 363 residues long: Large ribosomal subunit protein uL4 (363 aa).

The protein belongs to the universal ribosomal protein uL4 family. As to quaternary structure, component of the large ribosomal subunit. Mature ribosomes consist of a small (40S) and a large (60S) subunit. The 40S subunit contains about 32 different proteins and 1 molecule of RNA (18S). The 60S subunit contains 45 different proteins and 3 molecules of RNA (25S, 5.8S and 5S).

It localises to the cytoplasm. Its function is as follows. Component of the ribosome, a large ribonucleoprotein complex responsible for the synthesis of proteins in the cell. The small ribosomal subunit (SSU) binds messenger RNAs (mRNAs) and translates the encoded message by selecting cognate aminoacyl-transfer RNA (tRNA) molecules. The large subunit (LSU) contains the ribosomal catalytic site termed the peptidyl transferase center (PTC), which catalyzes the formation of peptide bonds, thereby polymerizing the amino acids delivered by tRNAs into a polypeptide chain. The nascent polypeptides leave the ribosome through a tunnel in the LSU and interact with protein factors that function in enzymatic processing, targeting, and the membrane insertion of nascent chains at the exit of the ribosomal tunnel. The chain is Large ribosomal subunit protein uL4 from Candida albicans (strain SC5314 / ATCC MYA-2876) (Yeast).